A 159-amino-acid chain; its full sequence is Sulfur carrier protein DsrE2 (159 aa).

The next 2 helical transmembrane spans lie at 21-43 (PFIL…TFYG) and 72-91 (WFPV…TAMM).

The protein localises to the cell membrane. It participates in energy metabolism; sulfur metabolism. Functionally, sulfur carrier protein probably involved in sulfur trafficking for oxidative dissimilatory sulfur metabolism. May be a component of a cytoplasmic sulfur relay system delivering sulfur to DsrC. Binds sulfur in the presence of sulfide in vitro. In Allochromatium vinosum (strain ATCC 17899 / DSM 180 / NBRC 103801 / NCIMB 10441 / D) (Chromatium vinosum), this protein is Sulfur carrier protein DsrE2.